Here is a 447-residue protein sequence, read N- to C-terminus: Lipid II isoglutaminyl synthase (glutamine-hydrolyzing) subunit MurT (447 aa).

The Zn(2+) site is built by C205, C208, C227, and C230. Residue D355 is part of the active site.

The protein belongs to the MurCDEF family. MurT subfamily. Forms a heterodimer with GatD.

It catalyses the reaction beta-D-GlcNAc-(1-&gt;4)-Mur2Ac(oyl-L-Ala-gamma-D-Glu-L-Lys-D-Ala-D-Ala)-di-trans,octa-cis-undecaprenyl diphosphate + L-glutamine + ATP + H2O = beta-D-GlcNAc-(1-&gt;4)-Mur2Ac(oyl-L-Ala-D-isoglutaminyl-L-Lys-D-Ala-D-Ala)-di-trans,octa-cis-undecaprenyl diphosphate + L-glutamate + ADP + phosphate + H(+). The enzyme catalyses beta-D-GlcNAc-(1-&gt;4)-Mur2Ac(oyl-L-Ala-gamma-D-Glu-L-Lys-D-Ala-D-Ala)-di-trans,octa-cis-undecaprenyl diphosphate + ATP = beta-D-GlcNAc-(1-&gt;4)-Mur2Ac(oyl-L-Ala-gamma-D-O-P-Glu-L-Lys-D-Ala-D-Ala)-di-trans,octa-cis-undecaprenyl diphosphate + ADP. The catalysed reaction is beta-D-GlcNAc-(1-&gt;4)-Mur2Ac(oyl-L-Ala-gamma-D-O-P-Glu-L-Lys-D-Ala-D-Ala)-di-trans,octa-cis-undecaprenyl diphosphate + NH4(+) = beta-D-GlcNAc-(1-&gt;4)-Mur2Ac(oyl-L-Ala-D-isoglutaminyl-L-Lys-D-Ala-D-Ala)-di-trans,octa-cis-undecaprenyl diphosphate + phosphate + H(+). The protein operates within cell wall biogenesis; peptidoglycan biosynthesis. The lipid II isoglutaminyl synthase complex catalyzes the formation of alpha-D-isoglutamine in the cell wall lipid II stem peptide. The MurT subunit catalyzes the ATP-dependent amidation of D-glutamate residue of lipid II, converting it to an isoglutamine residue. This chain is Lipid II isoglutaminyl synthase (glutamine-hydrolyzing) subunit MurT, found in Streptococcus pneumoniae (strain ATCC BAA-255 / R6).